The chain runs to 615 residues: DNA mismatch repair protein MutL (615 aa).

The interval Phe363–Tyr397 is disordered. Over residues Ala364–Pro391 the composition is skewed to low complexity.

This sequence belongs to the DNA mismatch repair MutL/HexB family.

Its function is as follows. This protein is involved in the repair of mismatches in DNA. It is required for dam-dependent methyl-directed DNA mismatch repair. May act as a 'molecular matchmaker', a protein that promotes the formation of a stable complex between two or more DNA-binding proteins in an ATP-dependent manner without itself being part of a final effector complex. This is DNA mismatch repair protein MutL from Shigella boydii serotype 18 (strain CDC 3083-94 / BS512).